We begin with the raw amino-acid sequence, 301 residues long: UDP-N-acetylenolpyruvoylglucosamine reductase (301 aa).

In terms of domain architecture, FAD-binding PCMH-type spans 26-193 (KTGGPAQYLA…VSATFGLEPG (168 aa)). Arg-172 is an active-site residue. Catalysis depends on Ser-222, which acts as the Proton donor. The active site involves Glu-292.

The protein belongs to the MurB family. Requires FAD as cofactor.

The protein resides in the cytoplasm. It catalyses the reaction UDP-N-acetyl-alpha-D-muramate + NADP(+) = UDP-N-acetyl-3-O-(1-carboxyvinyl)-alpha-D-glucosamine + NADPH + H(+). The protein operates within cell wall biogenesis; peptidoglycan biosynthesis. In terms of biological role, cell wall formation. This chain is UDP-N-acetylenolpyruvoylglucosamine reductase, found in Lactobacillus johnsonii (strain CNCM I-12250 / La1 / NCC 533).